The chain runs to 823 residues: Hypoxia-inducible factor 1-alpha (823 aa).

The disordered stretch occupies residues 1–30 (MEGAGGANDKKKISSERRKEKSRDAARSRR). The tract at residues 1-401 (MEGAGGANDK…KEPDALTLLA (401 aa)) is interaction with TSGA10. Positions 8–30 (NDKKKISSERRKEKSRDAARSRR) are enriched in basic and acidic residues. In terms of domain architecture, bHLH spans 17–70 (RRKEKSRDAARSRRSKESEVFYELAHQLPLPHNVSSHLDKASVMRLTISYLRVR). Residues 21–30 (KSRDAARSRR) form a DNA-binding region. The region spanning 85–158 (KAQMNCFYLK…THRNGLVKKG (74 aa)) is the PAS 1 domain. The required for heterodimer formation with ARNT stretch occupies residues 170–191 (RMKCTLTSRGRTMNIKSATWKV). Residues 228–298 (PHPSNIEIPL…KTHHDMFTKG (71 aa)) enclose the PAS 2 domain. Residue serine 247 is modified to Phosphoserine; by CK1. A PAC domain is found at 302–345 (TGQYRMLAKRGGYVWIETQATVIYNTKNSQPQCIVCVNYVVSGI). The segment at 401–600 (APAAGDTIIS…QSASTNTVFQ (200 aa)) is ODD. 4-hydroxyproline is present on proline 402. The span at 494–517 (IQDQPASPSDGSTRQSSPEPNSPS) shows a compositional bias: polar residues. The segment at 494–521 (IQDQPASPSDGSTRQSSPEPNSPSEYCF) is disordered. Residues 531 to 575 (FKLELVEKLFAEDTEAKNPFSTQDTDLDLEMLAPYIPMDDDFQLR) are NTAD. Position 532 is an N6-acetyllysine; alternate (lysine 532). A Glycyl lysine isopeptide (Lys-Gly) (interchain with G-Cter in ubiquitin); alternate cross-link involves residue lysine 532. Glycyl lysine isopeptide (Lys-Gly) (interchain with G-Cter in ubiquitin) cross-links involve residues lysine 538 and lysine 547. At serine 551 the chain carries Phosphoserine; by GSK3-beta. Threonine 555 is subject to Phosphothreonine; by GSK3-beta. A 4-hydroxyproline modification is found at proline 564. Serine 576 is modified (phosphoserine; by PLK3). The ID stretch occupies residues 576–782 (SFDQLSPLEN…SDLACRLLGQ (207 aa)). Disordered stretches follow at residues 581-602 (SPLE…FQPT) and 639-685 (PSPP…PRSP). At serine 589 the chain carries Phosphoserine; by GSK3-beta. Residues 651–666 (ATTSPYSDTGSRTASP) show a composition bias toward polar residues. The residue at position 654 (serine 654) is a Phosphoserine; by PLK3. N6-acetyllysine is present on lysine 706. The short motif at 715–721 (RKRKIEH) is the Nuclear localization signal element. Positions 783-823 (SMDESGLPQLTSYDCEVNAPIQGSRNLLQGEELLRALDQVN) are CTAD. Cysteine 797 is subject to S-nitrosocysteine. Residue asparagine 800 is modified to (3S)-3-hydroxyasparagine.

In terms of assembly, interacts with the ARNT; forms a heterodimer that binds core DNA sequence 5'-TACGTG-3' within the hypoxia response element (HRE) of target gene promoters. Interacts with COPS5; the interaction increases the transcriptional activity of HIF1A through increased stability. Interacts with EP300 (via TAZ-type 1 domains); the interaction is stimulated in response to hypoxia and inhibited by CITED2. Interacts with CREBBP (via TAZ-type 1 domains). Interacts with NCOA1, NCOA2, APEX1 and HSP90. Interacts (hydroxylated within the ODD domain) with VHLL (via beta domain); the interaction, leads to polyubiquitination and subsequent HIF1A proteasomal degradation. During hypoxia, sumoylated HIF1A also binds VHL; the interaction promotes the ubiquitination of HIF1A. Interacts with SENP1; the interaction desumoylates HIF1A resulting in stabilization and activation of transcription. Interacts (via the ODD domain) with NAA10; the interaction appears not to acetylate HIF1A nor have any affect on protein stability, during hypoxia. Interacts with RWDD3; the interaction enhances HIF1A sumoylation. Interacts with TSGA10. Interacts with HIF3A. Interacts with RORA (via the DNA binding domain); the interaction enhances HIF1A transcription under hypoxia through increasing protein stability. Interaction with PSMA7 inhibits the transactivation activity of HIF1A under both normoxic and hypoxia-mimicking conditions. Interacts with USP20. Interacts with RACK1; promotes HIF1A ubiquitination and proteasome-mediated degradation. Interacts (via N-terminus) with USP19. Interacts with SIRT2. Interacts (deacetylated form) with EGLN1. Interacts with CBFA2T3. Interacts with HSP90AA1 and HSP90AB1. Interacts with DCUN1D1; this interaction increases the interaction between VHL and DCUN1D1. Interacts with HIF1AN. In terms of processing, S-nitrosylation of Cys-797 may be responsible for increased recruitment of p300 coactivator necessary for transcriptional activity of HIF-1 complex. Post-translationally, acetylation of Lys-532 by ARD1 increases interaction with VHL and stimulates subsequent proteasomal degradation. Deacetylation of Lys-706 by SIRT2 increases its interaction with and hydroxylation by EGLN1 thereby inactivating HIF1A activity by inducing its proteasomal degradation. Ubiquitinated; in normoxia, following hydroxylation and interaction with VHL. Lys-532 appears to be the principal site of ubiquitination. Clioquinol, the Cu/Zn-chelator, inhibits ubiquitination through preventing hydroxylation at Asn-800. Ubiquitinated by E3 ligase VHL. Deubiquitinated by UCHL1. In terms of processing, requires phosphorylation for DNA-binding. Phosphorylation at Ser-247 by CSNK1D/CK1 represses kinase activity and impairs ARNT binding. Phosphorylation by GSK3-beta and PLK3 promote degradation by the proteasome. Post-translationally, the iron and 2-oxoglutarate dependent 3-hydroxylation of asparagine is (S) stereospecific within HIF CTAD domains. Sumoylated; with SUMO1 under hypoxia. Sumoylation is enhanced through interaction with RWDD3. Both sumoylation and desumoylation seem to be involved in the regulation of its stability during hypoxia. Sumoylation can promote either its stabilization or its VHL-dependent degradation by promoting hydroxyproline-independent HIF1A-VHL complex binding, thus leading to HIF1A ubiquitination and proteasomal degradation. Desumoylation by SENP1 increases its stability amd transcriptional activity. There is a disaccord between various publications on the effect of sumoylation and desumoylation on its stability and transcriptional activity. In terms of processing, in normoxia, is hydroxylated on Pro-402 and Pro-564 in the oxygen-dependent degradation domain (ODD) by EGLN1/PHD2 and EGLN2/PHD1. EGLN3/PHD3 has also been shown to hydroxylate Pro-564. The hydroxylated prolines promote interaction with VHL, initiating rapid ubiquitination and subsequent proteasomal degradation. Deubiquitinated by USP20. Under hypoxia, proline hydroxylation is impaired and ubiquitination is attenuated, resulting in stabilization. In normoxia, is hydroxylated on Asn-800 by HIF1AN, thus abrogating interaction with CREBBP and EP300 and preventing transcriptional activation. Repressed by iron ion, via Fe(2+) prolyl hydroxylase (PHD) enzymes-mediated hydroxylation and subsequent proteasomal degradation.

The protein resides in the cytoplasm. It localises to the nucleus. With respect to regulation, induced by reactive oxygen species (ROS). Its function is as follows. Functions as a master transcriptional regulator of the adaptive response to hypoxia. Under hypoxic conditions, activates the transcription of over 40 genes, including erythropoietin, glucose transporters, glycolytic enzymes, vascular endothelial growth factor, HILPDA, and other genes whose protein products increase oxygen delivery or facilitate metabolic adaptation to hypoxia. Plays an essential role in embryonic vascularization, tumor angiogenesis and pathophysiology of ischemic disease. Heterodimerizes with ARNT; heterodimer binds to core DNA sequence 5'-TACGTG-3' within the hypoxia response element (HRE) of target gene promoters. Activation requires recruitment of transcriptional coactivators such as CREBBP and EP300. Activity is enhanced by interaction with NCOA1 and/or NCOA2. Interaction with redox regulatory protein APEX1 seems to activate CTAD and potentiates activation by NCOA1 and CREBBP. Involved in the axonal distribution and transport of mitochondria in neurons during hypoxia. This chain is Hypoxia-inducible factor 1-alpha (HIF1A), found in Bos taurus (Bovine).